A 180-amino-acid chain; its full sequence is Der GTPase-activating protein YihI (180 aa).

2 disordered regions span residues M1 to R88 and P147 to E180. 4 stretches are compositionally biased toward basic and acidic residues: residues F18 to S33, E50 to L67, V77 to R88, and A153 to E163. A compositionally biased stretch (acidic residues) spans D164–D173.

This sequence belongs to the YihI family. As to quaternary structure, interacts with Der.

In terms of biological role, a GTPase-activating protein (GAP) that modifies Der/EngA GTPase function. May play a role in ribosome biogenesis. The sequence is that of Der GTPase-activating protein YihI from Photobacterium profundum (strain SS9).